A 387-amino-acid polypeptide reads, in one-letter code: Ferrochelatase (387 aa).

Positions 196 and 277 each coordinate Fe cation.

It belongs to the ferrochelatase family.

Its subcellular location is the cytoplasm. It catalyses the reaction heme b + 2 H(+) = protoporphyrin IX + Fe(2+). It participates in porphyrin-containing compound metabolism; protoheme biosynthesis; protoheme from protoporphyrin-IX: step 1/1. Its function is as follows. Catalyzes the ferrous insertion into protoporphyrin IX. The polypeptide is Ferrochelatase (Cyanothece sp. (strain PCC 7425 / ATCC 29141)).